Here is a 494-residue protein sequence, read N- to C-terminus: 5'-3' exonuclease PLD3 (494 aa).

Residues 1 to 37 (MNPKVEYKQIQSHDEAENQVLQHECHQAKARKYYRCA) are Cytoplasmic-facing. Residues 38-58 (VVIAIIITLLFCVLASQLLLF) traverse the membrane as a helical; Signal-anchor for type II membrane protein segment. At 59 to 494 (PLFSITSQTT…LSSWKEKCIF (436 aa)) the chain is on the lumenal side. Asparagine 100 is a glycosylation site (N-linked (GlcNAc...) asparagine). Residues 198 to 225 (TDGVLHTKFWVVDSEHFYIGSANMDWRS) enclose the PLD phosphodiesterase 1 domain. Catalysis depends on residues histidine 203, lysine 205, and aspartate 210. 5 N-linked (GlcNAc...) asparagine glycosylation sites follow: asparagine 238, asparagine 260, asparagine 270, asparagine 286, and asparagine 389. A PLD phosphodiesterase 2 domain is found at 413 to 439 (YARVNHNKYMVTDRVAYIGTSNWSGDY). Active-site residues include histidine 418, lysine 420, and aspartate 425. N-linked (GlcNAc...) asparagine glycans are attached at residues asparagine 434, asparagine 451, and asparagine 477.

The protein belongs to the phospholipase D family. N-glycosylated. In terms of processing, proteolytically processed to a soluble form that is stable within endosomes and lysosomes. During transport through the secretory pathway becomes proteolysed by cysteine proteases, thereby releasing a stable soluble lysosomal lumenal polypeptide, whereas the transmembrane-bound fragment is rapidly degraded. Its transport route to lysosomes involves ubiquitination and the ESCRT complex. Post-translationally, ubiquitinated. Ubiquitination mediates sorting into lysosomes.

It localises to the endoplasmic reticulum membrane. Its subcellular location is the lysosome lumen. The protein resides in the early endosome membrane. It is found in the late endosome membrane. The protein localises to the golgi apparatus membrane. It localises to the endosome membrane. The catalysed reaction is Exonucleolytic cleavage in the 5'- to 3'-direction to yield nucleoside 3'-phosphates.. In terms of biological role, 5'-&gt;3' DNA exonuclease which digests single-stranded DNA (ssDNA). Regulates inflammatory cytokine responses via the degradation of nucleic acids, by reducing the concentration of ssDNA able to stimulate TLR9, a nucleotide-sensing receptor in collaboration with PLD4. May be important in myotube formation. Plays a role in lysosomal homeostasis. Involved in the regulation of endosomal protein sorting. This chain is 5'-3' exonuclease PLD3 (pld3), found in Xenopus tropicalis (Western clawed frog).